A 399-amino-acid chain; its full sequence is Enoyl-[acyl-carrier-protein] reductase [NADH] (399 aa).

NAD(+) contacts are provided by residues 49 to 54, 75 to 76, 112 to 113, and 141 to 142; these read GASSGY, FE, DA, and LA. Y227 contributes to the substrate binding site. Y237 (proton donor) is an active-site residue. NAD(+) contacts are provided by residues K246 and 272–274; that span reads VVT.

It belongs to the TER reductase family. As to quaternary structure, monomer.

The enzyme catalyses a 2,3-saturated acyl-[ACP] + NAD(+) = a (2E)-enoyl-[ACP] + NADH + H(+). It functions in the pathway lipid metabolism; fatty acid biosynthesis. Functionally, involved in the final reduction of the elongation cycle of fatty acid synthesis (FAS II). Catalyzes the reduction of a carbon-carbon double bond in an enoyl moiety that is covalently linked to an acyl carrier protein (ACP). The sequence is that of Enoyl-[acyl-carrier-protein] reductase [NADH] from Pseudomonas putida (strain W619).